The chain runs to 45 residues: Large ribosomal subunit protein bL36 (45 aa).

A disordered region spans residues 1 to 45 (MKVSSSIKADPSKGDKLVRRKGRLYVINKKDPNRKQRQAGPARKK).

The protein belongs to the bacterial ribosomal protein bL36 family.

This chain is Large ribosomal subunit protein bL36, found in Chlamydia caviae (strain ATCC VR-813 / DSM 19441 / 03DC25 / GPIC) (Chlamydophila caviae).